The chain runs to 144 residues: Globin-1 (144 aa).

In terms of domain architecture, Globin spans 1-141 (VSANDIKNVQ…ILHQMSSYFA (141 aa)). H89 is a heme b binding site.

The protein belongs to the globin family. In terms of assembly, homodimer.

This Phreagena soyoae (Deep-sea cold-seep clam) protein is Globin-1.